Consider the following 643-residue polypeptide: Threonine--tRNA ligase 1 (643 aa).

The 62-residue stretch at 3-64 folds into the TGS domain; that stretch reads DMVKITFPDG…NEDGTVEIIT (62 aa). Positions 245-542 are catalytic; it reads DHRKLGKELK…LIEEHKGALP (298 aa). Zn(2+)-binding residues include C338, H389, and H519.

Belongs to the class-II aminoacyl-tRNA synthetase family. Homodimer. Requires Zn(2+) as cofactor.

Its subcellular location is the cytoplasm. It catalyses the reaction tRNA(Thr) + L-threonine + ATP = L-threonyl-tRNA(Thr) + AMP + diphosphate + H(+). Its function is as follows. Catalyzes the attachment of threonine to tRNA(Thr) in a two-step reaction: L-threonine is first activated by ATP to form Thr-AMP and then transferred to the acceptor end of tRNA(Thr). Also edits incorrectly charged L-seryl-tRNA(Thr). The sequence is that of Threonine--tRNA ligase 1 (thrS) from Bacillus subtilis (strain 168).